A 264-amino-acid polypeptide reads, in one-letter code: 5'-nucleotidase SurE (264 aa).

A divalent metal cation is bound by residues D12, D13, S43, and N98.

Belongs to the SurE nucleotidase family. The cofactor is a divalent metal cation.

The protein localises to the cytoplasm. It carries out the reaction a ribonucleoside 5'-phosphate + H2O = a ribonucleoside + phosphate. Its function is as follows. Nucleotidase that shows phosphatase activity on nucleoside 5'-monophosphates. This chain is 5'-nucleotidase SurE, found in Sulfurovum sp. (strain NBC37-1).